Reading from the N-terminus, the 211-residue chain is N-(5'-phosphoribosyl)anthranilate isomerase (211 aa).

Belongs to the TrpF family.

It catalyses the reaction N-(5-phospho-beta-D-ribosyl)anthranilate = 1-(2-carboxyphenylamino)-1-deoxy-D-ribulose 5-phosphate. Its pathway is amino-acid biosynthesis; L-tryptophan biosynthesis; L-tryptophan from chorismate: step 3/5. In Desulfovibrio desulfuricans (strain ATCC 27774 / DSM 6949 / MB), this protein is N-(5'-phosphoribosyl)anthranilate isomerase.